The primary structure comprises 160 residues: uncharacterized protein (160 aa).

The signal sequence occupies residues 1 to 23 (MSIPHSVFSALLVFVALATTTLA). Residues 24–132 (STEACLPTNK…DPNTAYWSSD (109 aa)) lie on the Cytoplasmic side of the membrane. Residues 133 to 155 (LFGFYTTPTNVTVEMTGYLIWSM) traverse the membrane as a helical segment. Over 156–160 (GNRRR) the chain is Extracellular.

The protein to yeast protein FLO1.

It is found in the cell membrane. This is an uncharacterized protein from Saccharomyces cerevisiae (strain ATCC 204508 / S288c) (Baker's yeast).